Here is a 373-residue protein sequence, read N- to C-terminus: MTRSGDEAQLMTGVTGDLAGTELGLTPSLTKNAGVPTTDQPQKGKDFTSDQEVRWCPGCGDYVILNTIRNFLPELGLRRENIVFISGIGCSSRFPYYLETYGFHSIHGRAPAIATGLALAREDLSVWVVTGDGDALSIGGNHLIHALRRNINVTILLFNNRIYGLTKGQYSPTSEVGKVTKSTPMGSLDHPFNPVSLALGAEATFVGRALDSDRNGLTEVLRAAAQHRGAALVEILQDCPIFNDGSFDALRKEGAEERVIKVRHGEPIVFGANGEYCVVKSGFGLEVAKTADVAIDEIIVHDAQVDDPAYAFALSRLSDQNLDHTVLGIFRHISRPTYDDAARSQVVAARNAAPSGTAALQSLLHGRDTWTVD.

A disordered region spans residues 26–50; that stretch reads TPSLTKNAGVPTTDQPQKGKDFTSD. Polar residues predominate over residues 27 to 41; it reads PSLTKNAGVPTTDQP.

KG oxidoreductase (KOR) is composed of KorA and KorB subunits. The cofactor is Mg(2+).

The enzyme catalyses 2 oxidized [2Fe-2S]-[ferredoxin] + 2-oxoglutarate + CoA = succinyl-CoA + 2 reduced [2Fe-2S]-[ferredoxin] + CO2 + H(+). It participates in carbohydrate metabolism; tricarboxylic acid cycle. Its function is as follows. Component of KG oxidoreductase (KOR) that catalyzes the CoA-dependent oxidative decarboxylation of 2-oxoglutarate (alpha-ketoglutarate, KG) to succinyl-CoA. Methyl viologen can act as electron acceptor in vitro; the physiologic electron acceptor is unknown. Is involved in the alternative TCA pathway that functions concurrently with fatty acid beta-oxidation. Since a growing body of evidence indicates that lipids (for example cholesterol and fatty acids) are a predominant growth substrate for M.tuberculosis during infection, flux through KOR likely represents an important step in intermediary metabolism in vivo. KOR-dependent decarboxylation of KG also appears to be an important source of CO(2) in M.tuberculosis metabolism. This chain is 2-oxoglutarate oxidoreductase subunit KorB (korB), found in Mycobacterium tuberculosis (strain ATCC 25618 / H37Rv).